The chain runs to 145 residues: LIM domain only protein 3 (145 aa).

2 LIM zinc-binding domains span residues 11-73 (KGCA…LFGV) and 75-137 (GNCA…GLMK).

The sequence is that of LIM domain only protein 3 from Danio rerio (Zebrafish).